Reading from the N-terminus, the 188-residue chain is Elongation factor P (188 aa).

This sequence belongs to the elongation factor P family.

Its subcellular location is the cytoplasm. It functions in the pathway protein biosynthesis; polypeptide chain elongation. Involved in peptide bond synthesis. Stimulates efficient translation and peptide-bond synthesis on native or reconstituted 70S ribosomes in vitro. Probably functions indirectly by altering the affinity of the ribosome for aminoacyl-tRNA, thus increasing their reactivity as acceptors for peptidyl transferase. The protein is Elongation factor P of Wolbachia pipientis wMel.